The primary structure comprises 421 residues: Putative transporter AmpG 3 (421 aa).

A run of 12 helical transmembrane segments spans residues 6 to 26 (YLIG…LIFF), 41 to 61 (IIGA…WSPF), 80 to 100 (WALV…KRSP), 104 to 124 (LCIT…QDIV), 139 to 159 (LSIV…LGSV), 166 to 186 (IIFG…VGPI), 230 to 250 (LLLI…PMAM), 274 to 294 (LLIM…IGIF), 297 to 317 (VLIG…LATI), 324 to 344 (FIIT…IISI), 360 to 380 (AISA…GGIC), and 388 to 408 (VFFL…YTIY).

This sequence belongs to the major facilitator superfamily.

The protein localises to the cell inner membrane. This Rickettsia prowazekii (strain Madrid E) protein is Putative transporter AmpG 3 (ampG3).